We begin with the raw amino-acid sequence, 254 residues long: 3-oxo-5-alpha-steroid 4-dehydrogenase 2 (254 aa).

Transmembrane regions (helical) follow at residues 8–28 (SPVLAGSATLVALGALALYVA), 72–92 (PLSLFGPPGTVLLGLFCLHYF), 146–166 (FSLGVFLFILGMGINIHSDYI), and 206–226 (LATWSLPALAFAFFSLCFLGL).

This sequence belongs to the steroid 5-alpha reductase family. In terms of tissue distribution, expressed in high levels in the prostate and many other androgen-sensitive tissues.

The protein localises to the microsome membrane. It localises to the endoplasmic reticulum membrane. The catalysed reaction is a 3-oxo-5alpha-steroid + NADP(+) = a 3-oxo-Delta(4)-steroid + NADPH + H(+). The enzyme catalyses 17beta-hydroxy-5alpha-androstan-3-one + NADP(+) = testosterone + NADPH + H(+). It catalyses the reaction 5alpha-pregnane-3,20-dione + NADP(+) = progesterone + NADPH + H(+). In terms of biological role, converts testosterone (T) into 5-alpha-dihydrotestosterone (DHT) and progesterone or corticosterone into their corresponding 5-alpha-3-oxosteroids. It plays a central role in sexual differentiation and androgen physiology. This chain is 3-oxo-5-alpha-steroid 4-dehydrogenase 2 (SRD5A2), found in Homo sapiens (Human).